A 372-amino-acid chain; its full sequence is tRNA N6-adenosine threonylcarbamoyltransferase (372 aa).

Positions 133, 137, and 154 each coordinate a divalent metal cation. Substrate contacts are provided by residues 154 to 158, D186, G201, E205, and N301; that span reads YVSGG. An a divalent metal cation-binding site is contributed by D330.

This sequence belongs to the KAE1 / TsaD family. In terms of assembly, component of the EKC/KEOPS complex composed of at least BUD32, CGI121, GON7, KAE1 and PCC1; the whole complex dimerizes. Requires a divalent metal cation as cofactor.

It localises to the cytoplasm. Its subcellular location is the nucleus. It catalyses the reaction L-threonylcarbamoyladenylate + adenosine(37) in tRNA = N(6)-L-threonylcarbamoyladenosine(37) in tRNA + AMP + H(+). In terms of biological role, component of the EKC/KEOPS complex that is required for the formation of a threonylcarbamoyl group on adenosine at position 37 (t(6)A37) in tRNAs that read codons beginning with adenine. The complex is probably involved in the transfer of the threonylcarbamoyl moiety of threonylcarbamoyl-AMP (TC-AMP) to the N6 group of A37. KAE1 likely plays a direct catalytic role in this reaction, but requires other protein(s) of the complex to fulfill this activity. The EKC/KEOPS complex also promotes both telomere uncapping and telomere elongation. The complex is required for efficient recruitment of transcriptional coactivators. The protein is tRNA N6-adenosine threonylcarbamoyltransferase of Candida albicans (strain SC5314 / ATCC MYA-2876) (Yeast).